The sequence spans 403 residues: Phosphopentomutase (403 aa).

Mn(2+) is bound by residues Asp-13, Asp-298, His-303, Asp-339, His-340, and His-351.

It belongs to the phosphopentomutase family. Requires Mn(2+) as cofactor.

It localises to the cytoplasm. The catalysed reaction is 2-deoxy-alpha-D-ribose 1-phosphate = 2-deoxy-D-ribose 5-phosphate. The enzyme catalyses alpha-D-ribose 1-phosphate = D-ribose 5-phosphate. It participates in carbohydrate degradation; 2-deoxy-D-ribose 1-phosphate degradation; D-glyceraldehyde 3-phosphate and acetaldehyde from 2-deoxy-alpha-D-ribose 1-phosphate: step 1/2. Isomerase that catalyzes the conversion of deoxy-ribose 1-phosphate (dRib-1-P) and ribose 1-phosphate (Rib-1-P) to deoxy-ribose 5-phosphate (dRib-5-P) and ribose 5-phosphate (Rib-5-P), respectively. In Streptococcus suis (strain 05ZYH33), this protein is Phosphopentomutase.